Reading from the N-terminus, the 450-residue chain is Asparagine--tRNA ligase (450 aa).

The protein belongs to the class-II aminoacyl-tRNA synthetase family. In terms of assembly, homodimer.

Its subcellular location is the cytoplasm. The enzyme catalyses tRNA(Asn) + L-asparagine + ATP = L-asparaginyl-tRNA(Asn) + AMP + diphosphate + H(+). The sequence is that of Asparagine--tRNA ligase from Mycoplasmopsis pulmonis (strain UAB CTIP) (Mycoplasma pulmonis).